The chain runs to 40 residues: MTDTTGRIPLWLIGTLTGILVIGLIGIFFYGSYSGLGSSL.

A helical membrane pass occupies residues 8–28 (IPLWLIGTLTGILVIGLIGIF).

Belongs to the PsbJ family. In terms of assembly, PSII is composed of 1 copy each of membrane proteins PsbA, PsbB, PsbC, PsbD, PsbE, PsbF, PsbH, PsbI, PsbJ, PsbK, PsbL, PsbM, PsbT, PsbX, PsbY, PsbZ, Psb30/Ycf12, at least 3 peripheral proteins of the oxygen-evolving complex and a large number of cofactors. It forms dimeric complexes.

It is found in the plastid. The protein resides in the chloroplast thylakoid membrane. Its function is as follows. One of the components of the core complex of photosystem II (PSII). PSII is a light-driven water:plastoquinone oxidoreductase that uses light energy to abstract electrons from H(2)O, generating O(2) and a proton gradient subsequently used for ATP formation. It consists of a core antenna complex that captures photons, and an electron transfer chain that converts photonic excitation into a charge separation. This is Photosystem II reaction center protein J from Phalaenopsis aphrodite subsp. formosana (Moth orchid).